The following is a 484-amino-acid chain: Aldehyde dehydrogenase family 3 member A2 (484 aa).

Topologically, residues 1 to 463 (MERQVLRLRQ…FLLKQFNKGR (463 aa)) are cytoplasmic. Residue 185–190 (GNTAVG) participates in NAD(+) binding. Catalysis depends on residues glutamate 207 and cysteine 241. Serine 293 carries the post-translational modification Phosphoserine. The helical transmembrane segment at 464 to 484 (LGMLLFVCLVAVAAVIVKDQL) threads the bilayer. The Prevents secretion from ER motif lies at 481–484 (KDQL).

This sequence belongs to the aldehyde dehydrogenase family. As to quaternary structure, homodimer.

It is found in the membrane. The protein resides in the microsome membrane. It localises to the endoplasmic reticulum membrane. It carries out the reaction an aldehyde + NAD(+) + H2O = a carboxylate + NADH + 2 H(+). The catalysed reaction is a fatty aldehyde + NAD(+) + H2O = a fatty acid + NADH + 2 H(+). The enzyme catalyses hexadecanoate + NADH + 2 H(+) = hexadecanal + NAD(+) + H2O. It catalyses the reaction octanal + NAD(+) + H2O = octanoate + NADH + 2 H(+). It carries out the reaction (2E)-hexadecenal + NAD(+) + H2O = (E)-hexadec-2-enoate + NADH + 2 H(+). The catalysed reaction is 22-oxodocosanoate + NAD(+) + H2O = docosanedioate + NADH + 2 H(+). The enzyme catalyses 2,6,10,14-tetramethylpentadecanal + NAD(+) + H2O = 2,6,10,14-tetramethylpentadecanoate + NADH + 2 H(+). It catalyses the reaction octadecanal + NAD(+) + H2O = octadecanoate + NADH + 2 H(+). It carries out the reaction dodecanoate + NADH + 2 H(+) = dodecanal + NAD(+) + H2O. The catalysed reaction is decanal + NAD(+) + H2O = decanoate + NADH + 2 H(+). The enzyme catalyses tetradecanal + NAD(+) + H2O = tetradecanoate + NADH + 2 H(+). It catalyses the reaction heptanal + NAD(+) + H2O = heptanoate + NADH + 2 H(+). It carries out the reaction (2E,6E)-farnesal + NAD(+) + H2O = (2E,6E)-farnesoate + NADH + 2 H(+). Functionally, catalyzes the oxidation of medium and long-chain aliphatic aldehydes to fatty acids. Active on a variety of saturated and unsaturated aliphatic aldehydes between 6 and 24 carbons in length. Responsible for conversion of the sphingosine 1-phosphate (S1P) degradation product hexadecenal to hexadecenoic acid. The sequence is that of Aldehyde dehydrogenase family 3 member A2 (Aldh3a2) from Mus musculus (Mouse).